A 680-amino-acid chain; its full sequence is DNA-directed RNA polymerase subunit beta' (680 aa).

Positions 69, 71, 87, and 90 each coordinate Zn(2+). Residues aspartate 489, aspartate 491, and aspartate 493 each contribute to the Mg(2+) site.

Belongs to the RNA polymerase beta' chain family. RpoC1 subfamily. In terms of assembly, in plastids the minimal PEP RNA polymerase catalytic core is composed of four subunits: alpha, beta, beta', and beta''. When a (nuclear-encoded) sigma factor is associated with the core the holoenzyme is formed, which can initiate transcription. Requires Mg(2+) as cofactor. The cofactor is Zn(2+).

Its subcellular location is the plastid. The protein localises to the chloroplast. The catalysed reaction is RNA(n) + a ribonucleoside 5'-triphosphate = RNA(n+1) + diphosphate. In terms of biological role, DNA-dependent RNA polymerase catalyzes the transcription of DNA into RNA using the four ribonucleoside triphosphates as substrates. The protein is DNA-directed RNA polymerase subunit beta' of Lepidium virginicum (Virginia pepperweed).